Consider the following 229-residue polypeptide: E3 ubiquitin ligase TRIM40 (229 aa).

Residues Cys14–Arg57 form an RING-type zinc finger. The B box-type zinc-finger motif lies at Gly66–Ile107. Cys71, His74, Cys93, and His99 together coordinate Zn(2+). Residues Ile107–Glu154 adopt a coiled-coil conformation.

This sequence belongs to the TRIM/RBCC family. In terms of assembly, interacts with NEDD8.

The catalysed reaction is S-ubiquitinyl-[E2 ubiquitin-conjugating enzyme]-L-cysteine + [acceptor protein]-L-lysine = [E2 ubiquitin-conjugating enzyme]-L-cysteine + N(6)-ubiquitinyl-[acceptor protein]-L-lysine.. Its function is as follows. E3 ubiquitin-protein ligase that plays a role in the limitation of the innate immune response. Mediates inhibition of the RLR signaling pathway by ubiquitinating RIGI and IFIH1 receptors, leading to their proteasomal degradation. Also promotes the neddylation of IKBKG/NEMO, stabilizing NFKBIA, and thereby inhibiting of NF-kappa-B nuclear translocation and activation. The protein is E3 ubiquitin ligase TRIM40 (TRIM40) of Pan troglodytes (Chimpanzee).